Here is a 235-residue protein sequence, read N- to C-terminus: Protein GrpE (235 aa).

Residues 1 to 18 (MTDGNQKPDGNSGEQVTV) are compositionally biased toward polar residues. Disordered regions lie at residues 1–50 (MTDG…DAAH) and 198–235 (ESVDDGTAVADTAENDQADQGNSADTLGEQAESEPSGS). The segment covering 19–35 (TDKRRIDPETGEVRHVP) has biased composition (basic and acidic residues).

It belongs to the GrpE family. In terms of assembly, homodimer.

The protein resides in the cytoplasm. Its function is as follows. Participates actively in the response to hyperosmotic and heat shock by preventing the aggregation of stress-denatured proteins, in association with DnaK and GrpE. It is the nucleotide exchange factor for DnaK and may function as a thermosensor. Unfolded proteins bind initially to DnaJ; upon interaction with the DnaJ-bound protein, DnaK hydrolyzes its bound ATP, resulting in the formation of a stable complex. GrpE releases ADP from DnaK; ATP binding to DnaK triggers the release of the substrate protein, thus completing the reaction cycle. Several rounds of ATP-dependent interactions between DnaJ, DnaK and GrpE are required for fully efficient folding. The sequence is that of Protein GrpE from Mycobacterium bovis (strain BCG / Pasteur 1173P2).